The chain runs to 134 residues: MVSGPGHGSRNPERSFIINMKRVRMMMNSFNLFLMKYNFKMVFMVRPAPRGGADPEGVRSGINYNNYINIIIIYYIMMYLFMFYNINNYFMFNKYNMYIIFFNNYTINSYFGGIGRHDTTKMYYFTVWRFKSFK.

The protein resides in the mitochondrion. This is an uncharacterized protein from Saccharomyces cerevisiae (strain ATCC 204508 / S288c) (Baker's yeast).